Reading from the N-terminus, the 700-residue chain is Elongation factor G (700 aa).

Residues 10–286 form the tr-type G domain; the sequence is SKVRNIGIMA…AVIDYLPSPL (277 aa). Residues 19–26, 83–87, and 137–140 contribute to the GTP site; these read AHIDAGKT, DTPGH, and NKMD.

This sequence belongs to the TRAFAC class translation factor GTPase superfamily. Classic translation factor GTPase family. EF-G/EF-2 subfamily.

Its subcellular location is the cytoplasm. Catalyzes the GTP-dependent ribosomal translocation step during translation elongation. During this step, the ribosome changes from the pre-translocational (PRE) to the post-translocational (POST) state as the newly formed A-site-bound peptidyl-tRNA and P-site-bound deacylated tRNA move to the P and E sites, respectively. Catalyzes the coordinated movement of the two tRNA molecules, the mRNA and conformational changes in the ribosome. This Mycolicibacterium gilvum (strain PYR-GCK) (Mycobacterium gilvum (strain PYR-GCK)) protein is Elongation factor G.